The chain runs to 438 residues: LIM domain-containing protein C4F6.12 (438 aa).

2 disordered regions span residues 1 to 37 (MHSP…NNLV) and 49 to 78 (TGGR…TIKQ). The segment covering 24–37 (SPVSTNGSPLNNLV) has biased composition (polar residues). 2 positions are modified to phosphoserine: serine 67 and serine 96. 3 LIM zinc-binding domains span residues 256–316 (KSCH…QFSP), 318–375 (CKHC…NKYA), and 376–435 (VKCK…SVKF).

The polypeptide is LIM domain-containing protein C4F6.12 (Schizosaccharomyces pombe (strain 972 / ATCC 24843) (Fission yeast)).